A 246-amino-acid polypeptide reads, in one-letter code: UL16-binding protein 2 (246 aa).

An N-terminal signal peptide occupies residues 1–25 (MAAAAATKILLCLPLLLLLSGWSRA). Positions 29-117 (DPHSLCYDIT…IQLENYTPKE (89 aa)) are MHC class I alpha-1 like. A disulfide bridge links cysteine 50 with cysteine 66. N-linked (GlcNAc...) asparagine glycosylation is found at asparagine 68 and asparagine 82. Residues 118–210 (PLTLQARMSC…MDSTLEPSAG (93 aa)) form an MHC class I alpha-2 like region. Cysteine 127 and cysteine 190 are oxidised to a cystine. Serine 216 is a binding site for a protein. Serine 217 carries GPI-anchor amidated serine lipidation. Positions 218 to 246 (GTTQLRATATTLILCCLLIILPCFILPGI) are cleaved as a propeptide — removed in mature form.

Belongs to the MHC class I family. As to quaternary structure, interacts with KLRK1/NKG2D. Does not bind to beta2-microglobulin. In terms of assembly, (Microbial infection) In CMV-infected cells, interacts with the viral glycoprotein UL16; this interaction causes ULBP2 retention in the endoplasmic reticulum and cis-Golgi and prevents binding to and activation of KLRK1/NKG2D, providing CMV with an immune evasion mechanism. In terms of tissue distribution, expressed in various types of cancer cell lines and in the fetus, but not in normal tissues.

It is found in the cell membrane. It localises to the endoplasmic reticulum. Its subcellular location is the secreted. Binds and activates the KLRK1/NKG2D receptor, mediating natural killer cell cytotoxicity. This Homo sapiens (Human) protein is UL16-binding protein 2.